A 504-amino-acid polypeptide reads, in one-letter code: CaM kinase-like vesicle-associated protein (504 aa).

A Protein kinase domain is found at 24–286; that stretch reads YDLGQVVKTE…AEEAISHEWI (263 aa). The segment at 378–504 is disordered; the sequence is KSDDMASADR…AQESQRVETS (127 aa). Ser-384 is modified (phosphoserine). The span at 390 to 431 shows a compositional bias: polar residues; it reads TPATDGSATPATDGSVTPATDGSITPATDGSVTPATDRSATP. Thr-438 and Thr-462 each carry phosphothreonine. Residues 445–470 show a composition bias toward low complexity; it reads TVPAAQSSAAPAAKAAATPEPAVAQP.

Belongs to the protein kinase superfamily. CAMK Ser/Thr protein kinase family. As to quaternary structure, interacts with calmodulin, in the presence of calcium. The cofactor is Ca(2+). Expressed in brain and weakly in eye. Not detected in liver, kidney, spleen, thymus, bladder, aorta, lung, intestine, esophagus, stomach, skeletal muscle, heart, diaphragm, uterus, tail skin, submaxillary gland, prostate, ear, epididymis, placenta, pancreas, ovary, testis, adrenal gland, parathyroid gland, thyroid gland, pineal gland, pituitary and sciatic nerve. In adult hippocampus, predominantly expressed in caudate nucleus, cortex, hypothalamus, olfactory bulb, and midbrain and faintly in pons, brainstem and spinal cord.

The protein localises to the cell membrane. The protein resides in the cytoplasmic vesicle membrane. Functionally, has no detectable kinase activity in vitro. This Rattus norvegicus (Rat) protein is CaM kinase-like vesicle-associated protein (Camkv).